A 154-amino-acid polypeptide reads, in one-letter code: Small ribosomal subunit protein bS16 (154 aa).

The span at 111–121 (AAAGLAEAPTK) shows a compositional bias: low complexity. The interval 111–154 (AAAGLAEAPTKPAKKAAKAEAAPKTDEAAPKTEEQAGAGSGEQG) is disordered. The segment covering 127-144 (AKAEAAPKTDEAAPKTEE) has biased composition (basic and acidic residues).

It belongs to the bacterial ribosomal protein bS16 family.

This chain is Small ribosomal subunit protein bS16, found in Salinispora tropica (strain ATCC BAA-916 / DSM 44818 / JCM 13857 / NBRC 105044 / CNB-440).